Consider the following 152-residue polypeptide: Xanthine-guanine phosphoribosyltransferase (152 aa).

5-phospho-alpha-D-ribose 1-diphosphate is bound by residues arginine 37–glycine 38 and aspartate 88–threonine 96. Mg(2+) is bound at residue aspartate 89. Residues aspartate 92 and isoleucine 135 each coordinate guanine. 2 residues coordinate xanthine: aspartate 92 and isoleucine 135. GMP-binding positions include aspartate 92–threonine 96 and tryptophan 134–isoleucine 135.

Belongs to the purine/pyrimidine phosphoribosyltransferase family. XGPT subfamily. As to quaternary structure, homotetramer. Mg(2+) is required as a cofactor.

The protein localises to the cell inner membrane. It catalyses the reaction GMP + diphosphate = guanine + 5-phospho-alpha-D-ribose 1-diphosphate. The catalysed reaction is XMP + diphosphate = xanthine + 5-phospho-alpha-D-ribose 1-diphosphate. It carries out the reaction IMP + diphosphate = hypoxanthine + 5-phospho-alpha-D-ribose 1-diphosphate. Its pathway is purine metabolism; GMP biosynthesis via salvage pathway; GMP from guanine: step 1/1. It participates in purine metabolism; XMP biosynthesis via salvage pathway; XMP from xanthine: step 1/1. Purine salvage pathway enzyme that catalyzes the transfer of the ribosyl-5-phosphate group from 5-phospho-alpha-D-ribose 1-diphosphate (PRPP) to the N9 position of the 6-oxopurines guanine and xanthine to form the corresponding ribonucleotides GMP (guanosine 5'-monophosphate) and XMP (xanthosine 5'-monophosphate), with the release of PPi. To a lesser extent, also acts on hypoxanthine. The polypeptide is Xanthine-guanine phosphoribosyltransferase (Actinobacillus succinogenes (strain ATCC 55618 / DSM 22257 / CCUG 43843 / 130Z)).